Here is a 423-residue protein sequence, read N- to C-terminus: MKEIISRHKAGEQIGICSVCSAHPLVIESALRFDLNSGNKVLIEATSNQVNQFGGYTGMKPADFRDFVYGIAQEVGFPRERLILGGDHLGPNCWQNEPADTAMEKSVELIKAYVAAGFSKIHLDASMSCADDPTPLDPMVVAKRAALLCQAAETTATDEQKRHLTYVIGTEVPVPGGEASAINAVHVTREQDAARTLQTHQAAFRALGLDEALNRVIAIVVQPGVEFDHTQIIHYQPQAAKALSNWIKETPMVYEAHSTDYQTRQAYRALVRDHYAILKVGPALTFALREAIFALAQMENELISPEQRSRVLEVIDEVMLNEPGYWKKYYRPTWSQAMVDIHFSLSDRIRYYWPHPRIRQSVEKLIANLNNVTLPLGLISQFMPVQFERLSEGVLTPTPHNLIIDKIQDVLRAYRFGCTPDVA.

This sequence belongs to the GatZ/KbaZ family. GatZ subfamily. As to quaternary structure, forms a complex with GatY.

Its pathway is carbohydrate metabolism; D-tagatose 6-phosphate degradation; D-glyceraldehyde 3-phosphate and glycerone phosphate from D-tagatose 6-phosphate: step 2/2. In terms of biological role, component of the tagatose-1,6-bisphosphate aldolase GatYZ that is required for full activity and stability of the Y subunit. Could have a chaperone-like function for the proper and stable folding of GatY. When expressed alone, GatZ does not show any aldolase activity. Is involved in the catabolism of galactitol. This chain is D-tagatose-1,6-bisphosphate aldolase subunit GatZ, found in Salmonella dublin (strain CT_02021853).